Consider the following 445-residue polypeptide: WD repeat domain phosphoinositide-interacting protein 2 (445 aa).

A WD 1 repeat occupies 182–222 (AHDSPLAALAFDASGTKLATASEKGTVIRVFSIPEGQKLFE). The L/FRRG motif motif lies at 223 to 226 (FRRG). WD repeat units follow at residues 228–267 (KRCVSICSLAFSMDGMFLSASSNTETVHIFKLEAVREKPP) and 311–349 (GHKNICSLTTIQKIPRLLVGASDGYLYMYNLDPQEGGEC). Ser395 carries the phosphoserine modification.

It belongs to the WD repeat PROPPIN family. In terms of assembly, interacts with TECPR1. Interacts with ATG16L1. Interacts with ATG5. Interacts with WIPI1. Interacts with WDR45. May interact with NUDC. Interacts with ULK1 and RB1CC1.

The protein resides in the preautophagosomal structure membrane. Its function is as follows. Component of the autophagy machinery that controls the major intracellular degradation process by which cytoplasmic materials are packaged into autophagosomes and delivered to lysosomes for degradation. Involved in an early step of the formation of preautophagosomal structures. Binds and is activated by phosphatidylinositol 3-phosphate (PtdIns3P) forming on membranes of the endoplasmic reticulum upon activation of the upstream ULK1 and PI3 kinases. Mediates ER-isolation membranes contacts by interacting with the ULK1:RB1CC1 complex and PtdIns3P. Once activated, WIPI2 recruits at phagophore assembly sites the ATG12-ATG5-ATG16L1 complex that directly controls the elongation of the nascent autophagosomal membrane. The sequence is that of WD repeat domain phosphoinositide-interacting protein 2 from Mus musculus (Mouse).